The sequence spans 340 residues: Ketol-acid reductoisomerase (NADP(+)) (340 aa).

A KARI N-terminal Rossmann domain is found at 1 to 183; the sequence is MAITVYYDKD…GGGRTGIIET (183 aa). NADP(+) is bound by residues 26–29, R49, S52, S54, and 84–87; these read FGSQ and DEIQ. Residue H109 is part of the active site. G135 serves as a coordination point for NADP(+). The region spanning 184–329 is the KARI C-terminal knotted domain; it reads TFKAETETDL…RNLRAMMPWI (146 aa). The Mg(2+) site is built by D192, E196, E228, and E232. S253 serves as a coordination point for substrate.

Belongs to the ketol-acid reductoisomerase family. Mg(2+) is required as a cofactor.

The catalysed reaction is (2R)-2,3-dihydroxy-3-methylbutanoate + NADP(+) = (2S)-2-acetolactate + NADPH + H(+). The enzyme catalyses (2R,3R)-2,3-dihydroxy-3-methylpentanoate + NADP(+) = (S)-2-ethyl-2-hydroxy-3-oxobutanoate + NADPH + H(+). It functions in the pathway amino-acid biosynthesis; L-isoleucine biosynthesis; L-isoleucine from 2-oxobutanoate: step 2/4. The protein operates within amino-acid biosynthesis; L-valine biosynthesis; L-valine from pyruvate: step 2/4. In terms of biological role, involved in the biosynthesis of branched-chain amino acids (BCAA). Catalyzes an alkyl-migration followed by a ketol-acid reduction of (S)-2-acetolactate (S2AL) to yield (R)-2,3-dihydroxy-isovalerate. In the isomerase reaction, S2AL is rearranged via a Mg-dependent methyl migration to produce 3-hydroxy-3-methyl-2-ketobutyrate (HMKB). In the reductase reaction, this 2-ketoacid undergoes a metal-dependent reduction by NADPH to yield (R)-2,3-dihydroxy-isovalerate. The sequence is that of Ketol-acid reductoisomerase (NADP(+)) from Campylobacter jejuni (strain RM1221).